Here is a 672-residue protein sequence, read N- to C-terminus: Fumonisin cluster-specific transcription factor FUM21 (672 aa).

The segment at residues 30–56 is a DNA-binding region (zn(2)-C6 fungal-type); that stretch reads CESCKRRKVRCNGTNPCNQCQKSSIEC. 2 disordered regions span residues 65 to 111 and 190 to 212; these read ANDG…RFDG and KSSGPSYGMSEPPSRDSDPGFNT. Over residues 77–93 the composition is skewed to polar residues; that stretch reads SPVQHTRGSLTPPQTSP.

It is found in the nucleus. In terms of biological role, transcription factor that regulates the expression of the gene cluster that mediates the biosynthesis of fumonisins B1 (FB1), B2 (FB2), B3 (FB3), and B4 (FB4), which are carcinogenic mycotoxins. This Gibberella moniliformis (strain M3125 / FGSC 7600) (Maize ear and stalk rot fungus) protein is Fumonisin cluster-specific transcription factor FUM21 (FUM21).